We begin with the raw amino-acid sequence, 549 residues long: Glucose-6-phosphate isomerase (549 aa).

Catalysis depends on E355, which acts as the Proton donor. Catalysis depends on residues H386 and K514.

The protein belongs to the GPI family.

The protein resides in the cytoplasm. The enzyme catalyses alpha-D-glucose 6-phosphate = beta-D-fructose 6-phosphate. The protein operates within carbohydrate biosynthesis; gluconeogenesis. Its pathway is carbohydrate degradation; glycolysis; D-glyceraldehyde 3-phosphate and glycerone phosphate from D-glucose: step 2/4. Functionally, catalyzes the reversible isomerization of glucose-6-phosphate to fructose-6-phosphate. In Cronobacter sakazakii (strain ATCC BAA-894) (Enterobacter sakazakii), this protein is Glucose-6-phosphate isomerase.